We begin with the raw amino-acid sequence, 232 residues long: RNA chaperone ProQ (232 aa).

The disordered stretch occupies residues 105–182; it reads EAKARVQAQR…REEQHTPVSD (78 aa). The segment covering 117 to 136 has biased composition (basic and acidic residues); that stretch reads QQAKKREAAAAAGEKEDAPR. Residues 137 to 146 show a composition bias toward basic residues; that stretch reads RERKPRPTTP. The span at 147-177 shows a compositional bias: basic and acidic residues; the sequence is RRKEGAERKPRSQKPVEKAPKTVKAPREEQH.

This sequence belongs to the ProQ family.

The protein localises to the cytoplasm. Functionally, RNA chaperone with significant RNA binding, RNA strand exchange and RNA duplexing activities. May regulate ProP activity through an RNA-based, post-transcriptional mechanism. This Escherichia coli (strain UTI89 / UPEC) protein is RNA chaperone ProQ.